The chain runs to 242 residues: UPF0246 protein SPH_1662 (242 aa).

It belongs to the UPF0246 family.

This chain is UPF0246 protein SPH_1662, found in Streptococcus pneumoniae (strain Hungary19A-6).